Here is an 84-residue protein sequence, read N- to C-terminus: U4-theraphotoxin-Hhn1a (84 aa).

An N-terminal signal peptide occupies residues 1-22 (MKVTLIAILTCAAVLVLHTTAA). Residues 23–47 (EELEESQLMEVGMPDTELAAVDEER) constitute a propeptide that is removed on maturation. Cystine bridges form between cysteine 51/cysteine 65, cysteine 55/cysteine 76, and cysteine 70/cysteine 81.

Belongs to the neurotoxin 12 (Hwtx-2) family. 02 (Hwtx-2) subfamily. Expressed by the venom gland.

The protein localises to the secreted. Its function is as follows. Postsynaptic neurotoxin. The protein is U4-theraphotoxin-Hhn1a of Cyriopagopus hainanus (Chinese bird spider).